The sequence spans 413 residues: MGTFCSVVKFENLQELKRLCHWGPIIALGVIAICSAMAMIDSVLWYWPLHTTGGSVNFIMLINWTVMILYNYFNAMFVGPGFVPLGWKPENSQDSVYLQYCKVCQAYKAPRSHHCRKCNRCVMKMDHHCPWINNCCGYQNHASFTLFLLLAPLGCIHAAFIFVMTMYTQLYNRLSFGWNTVKIDMSAARRDPLPIIPFGLAAFAATLFALGLALGTTIAVGMLFFIQMKIILRNKTSIESWIEEKAKDRIQYYQLDEVFVFPYDMGSRWKNFKQVFTWSGVPEGDGLDWPIREGCHQYSLTIEQLKQKADKRVRSVRYKVIEDYSGTCCPLNRGIKTFFTSPCTEEPRIRLQKGEFILATRGLRYWLYGDKILDDSVLEGVSRIRGWFPRNCVEKCPCDAETDQAPEGEKKNR.

Topologically, residues 1-24 (MGTFCSVVKFENLQELKRLCHWGP) are cytoplasmic. Residues 25-45 (IIALGVIAICSAMAMIDSVLW) traverse the membrane as a helical segment. The Lumenal portion of the chain corresponds to 46 to 57 (YWPLHTTGGSVN). The chain crosses the membrane as a helical span at residues 58-78 (FIMLINWTVMILYNYFNAMFV). The Cytoplasmic portion of the chain corresponds to 79–143 (GPGFVPLGWK…NCCGYQNHAS (65 aa)). The DHHC domain maps to 99 to 149 (QYCKVCQAYKAPRSHHCRKCNRCVMKMDHHCPWINNCCGYQNHASFTLFLL). The S-palmitoyl cysteine intermediate role is filled by C129. Residues 144–164 (FTLFLLLAPLGCIHAAFIFVM) traverse the membrane as a helical segment. Residues 165–194 (TMYTQLYNRLSFGWNTVKIDMSAARRDPLP) are Lumenal-facing. The chain crosses the membrane as a helical span at residues 195–215 (IIPFGLAAFAATLFALGLALG). At 216–413 (TTIAVGMLFF…QAPEGEKKNR (198 aa)) the chain is on the cytoplasmic side. One can recognise an SH3 domain in the interval 313-398 (VRSVRYKVIE…PRNCVEKCPC (86 aa)). 3 S-palmitoyl cysteine lipidation sites follow: C328, C329, and C343. The Di-lysine motif motif lies at 410-413 (KKNR).

This sequence belongs to the DHHC palmitoyltransferase family. In terms of assembly, homooligomerizes. Interacts with SELENOK. In terms of processing, palmitoylated at 3 different sites by ZDHHC16. The combination of the different palmitoylation events strongly affects the quaternary assembly of ZDHHC6, its localization, stability and function. Palmitoylation at Cys-328 accelerates the turnover of ZDHHC6. Depalmitoylated by LYPLA2.

Its subcellular location is the endoplasmic reticulum membrane. The catalysed reaction is L-cysteinyl-[protein] + hexadecanoyl-CoA = S-hexadecanoyl-L-cysteinyl-[protein] + CoA. The enzyme catalyses L-cysteinyl-[protein] + octadecanoyl-CoA = S-octadecanoyl-L-cysteinyl-[protein] + CoA. Its function is as follows. Endoplasmic reticulum palmitoyl acyltransferase that mediates palmitoylation of proteins such as AMFR, CALX, ITPR1 and TFRC. Palmitoylates calnexin (CALX), which is required for its association with the ribosome-translocon complex and efficient folding of glycosylated proteins. Mediates palmitoylation of AMFR, promoting AMFR distribution to the peripheral endoplasmic reticulum. Together with SELENOK, palmitoylates ITPR1 in immune cells, leading to regulate ITPR1 stability and function. Stearoyltransferase that mediates stearoylation of TFRC to inhibit TFRC-mediated activation of the JNK pathway and mitochondrial fragmentation. This Bos taurus (Bovine) protein is Palmitoyltransferase ZDHHC6.